Reading from the N-terminus, the 207-residue chain is MMHQIYSCSDENIEVFTTVIPSKVSSPARRRAKSSQHLLTKNVVIESDLYTHQPLELLPHRGDRRDPGDGRRFGRLQTARPPTAHPAKASARPVGISEPKTSNLCGNRAYGKSLIPPVPRISVKTSASASLEATAMGTEKGAVLMRGSRHLKKMTEEYPALPQGAEASLPLTGSASCGVPGILRKMWTRHKKKSEYVGATNSAFEAD.

Positions 55 to 102 are disordered; it reads LELLPHRGDRRDPGDGRRFGRLQTARPPTAHPAKASARPVGISEPKTS. Residues 58–72 show a composition bias toward basic and acidic residues; sequence LPHRGDRRDPGDGRR.

It belongs to the vexin family.

The protein localises to the cell membrane. Its subcellular location is the nucleus. In terms of biological role, required for neurogenesis in the neural plate and retina. Strongly cooperates with neural bHLH factors to promote neurogenesis. This Pongo abelii (Sumatran orangutan) protein is Vexin.